The chain runs to 189 residues: Parkinson disease protein 7 homolog (189 aa).

Alanine 2 carries the post-translational modification N-acetylalanine. S-palmitoyl cysteine attachment occurs at residues cysteine 46 and cysteine 53. Tyrosine 67 carries the phosphotyrosine modification. The Nucleophile role is filled by cysteine 106. Residue cysteine 106 is modified to Cysteine sulfinic acid (-SO2H); alternate. Residue cysteine 106 is the site of S-palmitoyl cysteine; alternate attachment. Histidine 126 is a catalytic residue. Lysine 130 is covalently cross-linked (Glycyl lysine isopeptide (Lys-Gly) (interchain with G-Cter in SUMO)). Position 148 is an N6-acetyllysine (lysine 148). An N6-succinyllysine modification is found at lysine 182.

It belongs to the peptidase C56 family. In terms of assembly, homodimer. Binds EFCAB6/DJBP and PIAS2. Part of a ternary complex containing PARK7, EFCAB6/DJBP and AR. Interacts (via N-terminus) with OTUD7B. Interacts with BBS1, HIPK1, CLCF1 and MTERF. Forms a complex with PINK1 and PRKN. Interacts (via C-terminus) with NCF1; the interaction is enhanced by LPS and modulates NCF1 phosphorylation and membrane translocation. Interacts with NENF. Requires Deglycase activity does not require glutathione as a cofactor, however, glycated glutathione constitutes a PARK7 substrate. as cofactor. Post-translationally, sumoylated on Lys-130 by PIAS2 or PIAS4; which is essential for cell-growth promoting activity and transforming activity. In terms of processing, undergoes cleavage of a C-terminal peptide and subsequent activation of protease activity in response to oxidative stress. Ubiquitous. Detected on epididymal sperm. Highly expressed in testis and prostate. Detected at lower levels in heart, lung, brain, liver, kidney, seminal vesicle, caput and corpus epididymis.

The protein resides in the cell membrane. It is found in the cytoplasm. It localises to the membrane raft. The protein localises to the nucleus. Its subcellular location is the mitochondrion. The protein resides in the endoplasmic reticulum. The catalysed reaction is N(omega)-(1-hydroxy-2-oxopropyl)-L-arginyl-[protein] + H2O = lactate + L-arginyl-[protein] + H(+). It carries out the reaction N(6)-(1-hydroxy-2-oxopropyl)-L-lysyl-[protein] + H2O = lactate + L-lysyl-[protein] + H(+). The enzyme catalyses S-(1-hydroxy-2-oxopropyl)-L-cysteinyl-[protein] + H2O = lactate + L-cysteinyl-[protein] + H(+). It catalyses the reaction N(omega)-(1-hydroxy-2-oxoethyl)-L-arginyl-[protein] + H2O = L-arginyl-[protein] + glycolate + H(+). The catalysed reaction is N(6)-(1-hydroxy-2-oxoethyl)-L-lysyl-[protein] + H2O = glycolate + L-lysyl-[protein] + H(+). It carries out the reaction S-(1-hydroxy-2-oxoethyl)-L-cysteinyl-[protein] + H2O = glycolate + L-cysteinyl-[protein] + H(+). The enzyme catalyses N(2)-(1-hydroxy-2-oxopropyl)-dGTP + H2O = lactate + dGTP + H(+). It catalyses the reaction N(2)-(1-hydroxy-2-oxopropyl)-GTP + H2O = lactate + GTP + H(+). The catalysed reaction is N(2)-(1-hydroxy-2-oxopropyl)-GDP + H2O = lactate + GDP + H(+). It carries out the reaction N(2)-(1-hydroxy-2-oxopropyl)-GMP + H2O = lactate + GMP + H(+). The enzyme catalyses N(2)-(1-hydroxy-2-oxoethyl)-dGTP + H2O = dGTP + glycolate + H(+). It catalyses the reaction N(2)-(1-hydroxy-2-oxoethyl)-GTP + H2O = glycolate + GTP + H(+). The catalysed reaction is N(2)-(1-hydroxy-2-oxoethyl)-GDP + H2O = glycolate + GDP + H(+). It carries out the reaction N(2)-(1-hydroxy-2-oxoethyl)-GMP + H2O = glycolate + GMP + H(+). The enzyme catalyses an N(2)-(1-hydroxy-2-oxopropyl)-guanosine in RNA + H2O = a guanosine in RNA + lactate + H(+). It catalyses the reaction an N(2)-(1-hydroxy-2-oxopropyl)-2'-deoxyguanosine in DNA + H2O = a 2'-deoxyguanosine in DNA + lactate + H(+). The catalysed reaction is an N(2)-(1-hydroxy-2-oxoethyl)-guanosine in RNA + H2O = a guanosine in RNA + glycolate + H(+). It carries out the reaction an N(2)-(1-hydroxy-2-oxoethyl)-2'-deoxyguanosine in DNA + H2O = a 2'-deoxyguanosine in DNA + glycolate + H(+). In terms of biological role, protein and nucleotide deglycase that catalyzes the deglycation of the Maillard adducts formed between amino groups of proteins or nucleotides and reactive carbonyl groups of glyoxals. Thus, functions as a protein deglycase that repairs methylglyoxal- and glyoxal-glycated proteins, and releases repaired proteins and lactate or glycolate, respectively. Deglycates cysteine, arginine and lysine residues in proteins, and thus reactivates these proteins by reversing glycation by glyoxals. Acts on early glycation intermediates (hemithioacetals and aminocarbinols), preventing the formation of advanced glycation endproducts (AGE) that cause irreversible damage. Also functions as a nucleotide deglycase able to repair glycated guanine in the free nucleotide pool (GTP, GDP, GMP, dGTP) and in DNA and RNA. Is thus involved in a major nucleotide repair system named guanine glycation repair (GG repair), dedicated to reversing methylglyoxal and glyoxal damage via nucleotide sanitization and direct nucleic acid repair. Also displays an apparent glyoxalase activity that in fact reflects its deglycase activity. Plays an important role in cell protection against oxidative stress and cell death acting as oxidative stress sensor and redox-sensitive chaperone and protease; functions probably related to its primary function. It is involved in neuroprotective mechanisms like the stabilization of NFE2L2 and PINK1 proteins, male fertility as a positive regulator of androgen signaling pathway as well as cell growth and transformation through, for instance, the modulation of NF-kappa-B signaling pathway. Eliminates hydrogen peroxide and protects cells against hydrogen peroxide-induced cell death. Required for correct mitochondrial morphology and function as well as for autophagy of dysfunctional mitochondria. Plays a role in regulating expression or stability of the mitochondrial uncoupling proteins SLC25A14 and SLC25A27 in dopaminergic neurons of the substantia nigra pars compacta and attenuates the oxidative stress induced by calcium entry into the neurons via L-type channels during pacemaking. Regulates astrocyte inflammatory responses, may modulate lipid rafts-dependent endocytosis in astrocytes and neuronal cells. In pancreatic islets, involved in the maintenance of mitochondrial reactive oxygen species (ROS) levels and glucose homeostasis in an age- and diet dependent manner. Protects pancreatic beta cells from cell death induced by inflammatory and cytotoxic setting. Binds to a number of mRNAs containing multiple copies of GG or CC motifs and partially inhibits their translation but dissociates following oxidative stress. Metal-binding protein able to bind copper as well as toxic mercury ions, enhances the cell protection mechanism against induced metal toxicity. In macrophages, interacts with the NADPH oxidase subunit NCF1 to direct NADPH oxidase-dependent ROS production, and protects against sepsis. The sequence is that of Parkinson disease protein 7 homolog from Rattus norvegicus (Rat).